Consider the following 461-residue polypeptide: Photosystem II CP43 reaction center protein (461 aa).

Topologically, residues Met-1–Ile-48 are cytoplasmic. A helical transmembrane segment spans residues Val-49–Glu-71. Residues Gln-72–Ala-111 lie on the Lumenal side of the membrane. Residues Val-112–Ser-133 traverse the membrane as a helical segment. Residues Phe-134–Val-155 lie on the Cytoplasmic side of the membrane. A helical transmembrane segment spans residues Leu-156–Ala-178. Topologically, residues Pro-179 to Cys-232 are lumenal. The chain crosses the membrane as a helical span at residues Ile-233 to Ile-253. Over Trp-254–Ser-268 the chain is Cytoplasmic. A helical membrane pass occupies residues Met-269–Phe-289. The Lumenal portion of the chain corresponds to Tyr-290–Phe-424. Residue Glu-355 participates in [CaMn4O5] cluster binding. Residues Phe-425 to Arg-449 form a helical membrane-spanning segment. At Glu-450–Asp-461 the chain is on the cytoplasmic side.

In terms of assembly, PSII is composed of 1 copy each of membrane proteins PsbA, PsbB, PsbC, PsbD, PsbE, PsbF, PsbH, PsbI, PsbJ, PsbK, PsbL, PsbM, PsbT, PsbX, PsbY, PsbZ, Psb30/Ycf12, peripheral proteins PsbO, CyanoQ (PsbQ), PsbU, PsbV and a large number of cofactors. It forms dimeric complexes. Part of a photosystem II (PSII) assembly intermediate complex PSII-I; crystallized from a strain deleted of psbJ, it forms monomeric PSII before addition of the oxygen evolving complex. PSII-I includes 3 assembly factors not found in mature PSII (Psb27, Psb28 and Psb34), and CP43 (this protein) is not in its mature conformation. Binds multiple chlorophylls and provides some of the ligands for the Ca-4Mn-5O cluster of the oxygen-evolving complex. It may also provide a ligand for a Cl- that is required for oxygen evolution. PSII binds additional chlorophylls, carotenoids and specific lipids. is required as a cofactor.

The protein resides in the cellular thylakoid membrane. One of the components of the core complex of photosystem II (PSII). It binds chlorophyll and helps catalyze the primary light-induced photochemical processes of PSII. PSII is a light-driven water:plastoquinone oxidoreductase, using light energy to abstract electrons from H(2)O, generating O(2) and a proton gradient subsequently used for ATP formation. This Thermosynechococcus vestitus (strain NIES-2133 / IAM M-273 / BP-1) protein is Photosystem II CP43 reaction center protein.